Reading from the N-terminus, the 791-residue chain is Outer membrane protein assembly factor BamA (791 aa).

5 POTRA domains span residues 59-130, 131-209, 212-298, 301-383, and 386-459; these read NAIA…VTEK, PRID…VEEG, LYIK…VKEG, YKLG…IRKR, and VYIN…VKEQ.

Belongs to the BamA family. As to quaternary structure, part of the Bam complex.

Its subcellular location is the cell outer membrane. Functionally, part of the outer membrane protein assembly complex, which is involved in assembly and insertion of beta-barrel proteins into the outer membrane. This Nitratidesulfovibrio vulgaris (strain ATCC 29579 / DSM 644 / CCUG 34227 / NCIMB 8303 / VKM B-1760 / Hildenborough) (Desulfovibrio vulgaris) protein is Outer membrane protein assembly factor BamA.